A 173-amino-acid chain; its full sequence is Alpha-crystallin A chain (173 aa).

N-acetylmethionine is present on Met-1. A required for complex formation with BFSP1 and BFSP2 region spans residues 1–63 (MDVTIQHPWF…RTVLDSGISE (63 aa)). The residue at position 6 (Gln-6) is a Deamidated glutamine; partial. Ser-45 is modified (phosphoserine). Deamidated glutamine; partial is present on Gln-50. Positions 52–162 (LFRTVLDSGI…GHSERAIPVS (111 aa)) constitute a sHSP domain. Lys-70 carries the N6-acetyllysine modification. Gln-90 bears the Deamidated glutamine; partial mark. Lys-99 is subject to N6-acetyllysine. His-100 lines the Zn(2+) pocket. Residue Asn-101 is modified to Deamidated asparagine; partial. Glu-102 and His-107 together coordinate Zn(2+). The residue at position 122 (Ser-122) is a Phosphoserine. Asn-123 is modified (deamidated asparagine; partial). The segment at 145-173 (KVQSGLDAGHSERAIPVSREEKPSSAPSS) is disordered. A Deamidated glutamine; partial modification is found at Gln-147. The span at 153–167 (GHSERAIPVSREEKP) shows a compositional bias: basic and acidic residues. His-154 provides a ligand contact to Zn(2+). A glycan (O-linked (GlcNAc) serine) is linked at Ser-162.

Belongs to the small heat shock protein (HSP20) family. In terms of assembly, heteromer composed of three CRYAA and one CRYAB subunits. Inter-subunit bridging via zinc ions enhances stability, which is crucial as there is no protein turn over in the lens. Can also form homodimers and homotetramers (dimers of dimers) which serve as the building blocks of homooligomers. Within homooligomers, the zinc-binding motif is created from residues of 3 different molecules. His-100 and Glu-102 from one molecule are ligands of the zinc ion, and His-107 and His-154 residues from additional molecules complete the site with tetrahedral coordination geometry. Part of a complex required for lens intermediate filament formation composed of BFSP1, BFSP2 and CRYAA. Acetylation at Lys-70 may increase chaperone activity. In terms of processing, undergoes age-dependent proteolytical cleavage at the C-terminus.

Its subcellular location is the cytoplasm. It is found in the nucleus. Functionally, contributes to the transparency and refractive index of the lens. Acts as a chaperone, preventing aggregation of various proteins under a wide range of stress conditions. Required for the correct formation of lens intermediate filaments as part of a complex composed of BFSP1, BFSP2 and CRYAA. The protein is Alpha-crystallin A chain (CRYAA) of Oryctolagus cuniculus (Rabbit).